The sequence spans 545 residues: CTP synthase (545 aa).

The interval 1 to 266 (MTTNYIFVTG…DDYICKRFSL (266 aa)) is amidoligase domain. Residue Ser14 coordinates CTP. Ser14 lines the UTP pocket. ATP contacts are provided by residues 15-20 (SLGKGI) and Asp72. Mg(2+) contacts are provided by Asp72 and Glu140. Residues 147-149 (DIE), 187-192 (KTKPTQ), and Lys223 contribute to the CTP site. UTP is bound by residues 187 to 192 (KTKPTQ) and Lys223. 239–241 (KDV) provides a ligand contact to ATP. Residues 291 to 542 (TIGMVGKYIE…VKAASEYQKR (252 aa)) enclose the Glutamine amidotransferase type-1 domain. Gly352 provides a ligand contact to L-glutamine. The active-site Nucleophile; for glutamine hydrolysis is the Cys379. L-glutamine is bound by residues 380 to 383 (LGMQ), Glu403, and Arg470. Residues His515 and Glu517 contribute to the active site.

Belongs to the CTP synthase family. Homotetramer.

It carries out the reaction UTP + L-glutamine + ATP + H2O = CTP + L-glutamate + ADP + phosphate + 2 H(+). It catalyses the reaction L-glutamine + H2O = L-glutamate + NH4(+). The enzyme catalyses UTP + NH4(+) + ATP = CTP + ADP + phosphate + 2 H(+). Its pathway is pyrimidine metabolism; CTP biosynthesis via de novo pathway; CTP from UDP: step 2/2. With respect to regulation, allosterically activated by GTP, when glutamine is the substrate; GTP has no effect on the reaction when ammonia is the substrate. The allosteric effector GTP functions by stabilizing the protein conformation that binds the tetrahedral intermediate(s) formed during glutamine hydrolysis. Inhibited by the product CTP, via allosteric rather than competitive inhibition. Its function is as follows. Catalyzes the ATP-dependent amination of UTP to CTP with either L-glutamine or ammonia as the source of nitrogen. Regulates intracellular CTP levels through interactions with the four ribonucleotide triphosphates. This Klebsiella pneumoniae subsp. pneumoniae (strain ATCC 700721 / MGH 78578) protein is CTP synthase.